The sequence spans 86 residues: MANHKSSIKRIRQTIVRSERNRFYRTRLKNIVKDVRSAITAGNKEEAASAMGVANKQIQKFVSKGVLKKETAARKISRLHRAVNAI.

Belongs to the bacterial ribosomal protein bS20 family.

Binds directly to 16S ribosomal RNA. This is Small ribosomal subunit protein bS20 from Sulfurimonas denitrificans (strain ATCC 33889 / DSM 1251) (Thiomicrospira denitrificans (strain ATCC 33889 / DSM 1251)).